Reading from the N-terminus, the 920-residue chain is WD repeat-containing protein 47 (920 aa).

A LisH domain is found at 10-42 (KEVEIIKLILDFLNSKKLHISMLALEKESGVIN). Positions 45 to 102 (FSDDMLFLRQLILDGQWDEVLQFIQPLECMEKFDKKRFRYIILKQKFLEALCVNNAMS) constitute a CTLH domain. Thr-285 bears the Phosphothreonine mark. Phosphoserine is present on residues Ser-289, Ser-292, Ser-297, and Ser-312. A compositionally biased stretch (basic and acidic residues) spans 371 to 380 (YEESPERSDT). Residues 371 to 422 (YEESPERSDTPVEAQQPVSSEAMCQGSGLEKEPANGAQNPVPAKQEKNELRD) form a disordered region. A Phosphoserine modification is found at Ser-423. The tract at residues 501 to 594 (LNQQCSGSKN…RSKGEEDDKS (94 aa)) is disordered. Low complexity predominate over residues 506 to 523 (SGSKNNGSNNSSVTSFST). The segment covering 538–552 (NIHTSTPRNPGSTNH) has biased composition (polar residues). Thr-543 carries the post-translational modification Phosphothreonine. WD repeat units lie at residues 605–644 (EDTQAVRAVAFHPSGSLYAVGSNSKTLRVCAYPEKMDASA), 660–699 (HHKGSIYCVAWSPCGQLLATGSNDKYVKVLPFNAETCNAT), 707–749 (MHDG…GQGL), 754–792 (GHTGHILALYTWSGWMIASGSQDKTVRFWDLRVPSCVRV), 799–838 (GTGSAVASVAVDPSGRLLATGQEDSSCMLYDIRGGRMVQS), 841–880 (PHSSDVRSVRFSPGAHYLLTGSYDMKIKVTDLQGDLTKQL), and 887–919 (EHKDKVIQCRWHTQDLSFLSSSADRTVTLWTYS).

Interacts with MAP1S (via WD repeats). As to expression, enriched in the nervous system (at protein level).

It localises to the cytoplasm. The protein resides in the cytoskeleton. The polypeptide is WD repeat-containing protein 47 (Wdr47) (Mus musculus (Mouse)).